Consider the following 463-residue polypeptide: Argininosuccinate lyase (463 aa).

It belongs to the lyase 1 family. Argininosuccinate lyase subfamily.

It localises to the cytoplasm. It carries out the reaction 2-(N(omega)-L-arginino)succinate = fumarate + L-arginine. It functions in the pathway amino-acid biosynthesis; L-arginine biosynthesis; L-arginine from L-ornithine and carbamoyl phosphate: step 3/3. The polypeptide is Argininosuccinate lyase (Ruegeria pomeroyi (strain ATCC 700808 / DSM 15171 / DSS-3) (Silicibacter pomeroyi)).